Consider the following 1644-residue polypeptide: Terminal uridylyltransferase 4 (1644 aa).

Disordered stretches follow at residues 31–63, 96–168, and 205–257; these read NQTLKARNDKSVKEIENSSPNRNSSKKNKQNDI, CKAK…SLLL, and ALQN…EMDY. The span at 36–46 shows a compositional bias: basic and acidic residues; the sequence is ARNDKSVKEIE. S104 carries the post-translational modification Phosphoserine. Residues 112–125 show a composition bias toward polar residues; sequence TISQAKSEKATSLQ. S134 and S156 each carry phosphoserine. Residues 206-222 show a composition bias toward polar residues; the sequence is LQNSPRSQKQQTCTDNT. The segment covering 238 to 252 has biased composition (basic and acidic residues); the sequence is DLSKMKNDESNKENS. Positions 253-333 are required for interaction with LIN28A and pre-let-7 RNA; the sequence is SEMDYLENAT…KEKRHKKNIL (81 aa). The Zn(2+) site is built by C306, C309, H322, and H328. The tract at residues 579–617 is disordered; it reads EKNSIAEENKAKADQPKDDTKKTETDNQSNAMKEKHGKS. The span at 582–603 shows a compositional bias: basic and acidic residues; that stretch reads SIAEENKAKADQPKDDTKKTET. In terms of domain architecture, PAP-associated 1 spans 628-678; it reads SLGQLWLELLKFYTLDFALEEYVICVRIQDILTRENKNWPKRRIAIEDPFS. Positions 794–816 are disordered; the sequence is GQDSSSLSTSKSSEIEPKLDKKQ. The segment covering 806-816 has biased composition (basic and acidic residues); sequence SEIEPKLDKKQ. Residues 901–1634 are sufficient for monouridylation activity; the sequence is DKFILTSGKP…CATRRCRERC (734 aa). A CCHC-type 1 zinc finger spans residues 913–930; that stretch reads IVCSICKKDGHSKNDCPE. Residues 998–1001, 1008–1011, N1081, K1103, 1121–1125, and H1237 contribute to the UTP site; these read SSKN, SDLD, and SYAYI. D1009 and D1011 together coordinate Mg(2+). The 54-residue stretch at 1184–1237 folds into the PAP-associated 2 domain; that stretch reads SLGELWLGLLRFYTEEFDFKEYVISIRQKKLLTTFEKQWTSKCIAIEDPFDLNH. A CCHC-type 2 zinc finger spans residues 1293–1310; the sequence is RCCRVCGKIGHYMKDCPK. The interval 1321-1348 is disordered; it reads KDSEEEKEGNEEEKDSRDVLDPRDLHDT. Over residues 1334–1348 the composition is skewed to basic and acidic residues; that stretch reads KDSRDVLDPRDLHDT. A CCHC-type 3 zinc finger spans residues 1357-1374; that stretch reads LRCFICGDAGHVRRECPE. Residues 1401–1426 are compositionally biased toward low complexity; sequence AGSAQQQGDQSIRTRQSSECSESPSY. Residues 1401-1482 are disordered; sequence AGSAQQQGDQ…LYNFPQSPPA (82 aa). The span at 1441-1452 shows a compositional bias: polar residues; it reads AAITQPSSQPGS. Over residues 1453-1470 the composition is skewed to low complexity; that stretch reads QPKLGPPQQGAQPPHQVQ. Position 1624 is an omega-N-methylarginine (R1624).

It belongs to the DNA polymerase type-B-like family. In terms of assembly, interacts with LIN28A in the presence of pre-let-7 RNA. Interacts with T2BP. Interacts with MOV10; the interaction is RNA-dependent. Requires Mg(2+) as cofactor. Mn(2+) serves as cofactor.

It is found in the nucleus. Its subcellular location is the cytoplasm. It localises to the cytoplasmic ribonucleoprotein granule. It catalyses the reaction RNA(n) + UTP = RNA(n)-3'-uridine ribonucleotide + diphosphate. In terms of biological role, uridylyltransferase that mediates the terminal uridylation of mRNAs with short (less than 25 nucleotides) poly(A) tails, hence facilitating global mRNA decay. Essential for both oocyte maturation and fertility. Through 3' terminal uridylation of mRNA, sculpts, with TUT7, the maternal transcriptome by eliminating transcripts during oocyte growth. Involved in microRNA (miRNA)-induced gene silencing through uridylation of deadenylated miRNA targets. Also functions as an integral regulator of microRNA biogenesis using 3 different uridylation mechanisms. Acts as a suppressor of miRNA biogenesis by mediating the terminal uridylation of some miRNA precursors, including that of let-7 (pre-let-7), miR107, miR-143 and miR-200c. Uridylated miRNAs are not processed by Dicer and undergo degradation. Degradation of pre-let-7 contributes to the maintenance of embryonic stem (ES) cell pluripotency. Also catalyzes the 3' uridylation of miR-26A, a miRNA that targets IL6 transcript. This abrogates the silencing of IL6 transcript, hence promoting cytokine expression. In the absence of LIN28A, TUT7 and TUT4 monouridylate group II pre-miRNAs, which includes most of pre-let7 members, that shapes an optimal 3' end overhang for efficient processing. Adds oligo-U tails to truncated pre-miRNAS with a 5' overhang which may promote rapid degradation of non-functional pre-miRNA species. May also suppress Toll-like receptor-induced NF-kappa-B activation via binding to T2BP. Does not play a role in replication-dependent histone mRNA degradation. Due to functional redundancy between TUT4 and TUT7, the identification of the specific role of each of these proteins is difficult. TUT4 and TUT7 restrict retrotransposition of long interspersed element-1 (LINE-1) in cooperation with MOV10 counteracting the RNA chaperonne activity of L1RE1. TUT7 uridylates LINE-1 mRNAs in the cytoplasm which inhibits initiation of reverse transcription once in the nucleus, whereas uridylation by TUT4 destabilizes mRNAs in cytoplasmic ribonucleoprotein granules. The chain is Terminal uridylyltransferase 4 from Homo sapiens (Human).